We begin with the raw amino-acid sequence, 144 residues long: 3-hydroxyacyl-[acyl-carrier-protein] dehydratase FabZ (144 aa).

H51 is an active-site residue.

The protein belongs to the thioester dehydratase family. FabZ subfamily.

It is found in the cytoplasm. The enzyme catalyses a (3R)-hydroxyacyl-[ACP] = a (2E)-enoyl-[ACP] + H2O. In terms of biological role, involved in unsaturated fatty acids biosynthesis. Catalyzes the dehydration of short chain beta-hydroxyacyl-ACPs and long chain saturated and unsaturated beta-hydroxyacyl-ACPs. In Clostridium botulinum (strain Okra / Type B1), this protein is 3-hydroxyacyl-[acyl-carrier-protein] dehydratase FabZ.